Here is a 411-residue protein sequence, read N- to C-terminus: Glutamate dehydrogenase 3, mitochondrial (411 aa).

Residues 1-18 (MNALAATSRNFRQAARLL) constitute a mitochondrion transit peptide. Lys-102 is an active-site residue.

The protein belongs to the Glu/Leu/Phe/Val dehydrogenases family. In terms of tissue distribution, barely expressed in leaves, spikelets and roots. Glumes and stamens specific accumulation.

The protein resides in the mitochondrion. It carries out the reaction L-glutamate + NAD(+) + H2O = 2-oxoglutarate + NH4(+) + NADH + H(+). The catalysed reaction is L-glutamate + NADP(+) + H2O = 2-oxoglutarate + NH4(+) + NADPH + H(+). The protein is Glutamate dehydrogenase 3, mitochondrial (GDH3) of Oryza sativa subsp. japonica (Rice).